The sequence spans 79 residues: Conotoxin Vi6.3 (79 aa).

Positions 1–22 (MKLTCVLIITVLFLTASQLITA) are cleaved as a signal peptide. The propeptide occupies 23–47 (DYSRDQRQYRAVRLGDEMRNFKGAR). Intrachain disulfides connect C49/C62, C56/C67, and C61/C77. 2 positions are modified to 4-hydroxyproline: P60 and P63.

The protein belongs to the conotoxin O1 superfamily. In terms of tissue distribution, expressed by the venom duct.

It localises to the secreted. Functionally, ion channel inhibitor that inhibits the increase in intracellular calcium upon depolarization in DRG neurons. In vivo, both intraperitoneal and intracranial injections into mice induce hyperactivity. This Conus virgo (Virgin cone) protein is Conotoxin Vi6.3.